The following is a 223-amino-acid chain: Deoxyribose-phosphate aldolase (223 aa).

Residue aspartate 91 is the Proton donor/acceptor of the active site. Lysine 153 serves as the catalytic Schiff-base intermediate with acetaldehyde. Lysine 182 (proton donor/acceptor) is an active-site residue.

This sequence belongs to the DeoC/FbaB aldolase family. DeoC type 1 subfamily.

Its subcellular location is the cytoplasm. The catalysed reaction is 2-deoxy-D-ribose 5-phosphate = D-glyceraldehyde 3-phosphate + acetaldehyde. It functions in the pathway carbohydrate degradation; 2-deoxy-D-ribose 1-phosphate degradation; D-glyceraldehyde 3-phosphate and acetaldehyde from 2-deoxy-alpha-D-ribose 1-phosphate: step 2/2. Its function is as follows. Catalyzes a reversible aldol reaction between acetaldehyde and D-glyceraldehyde 3-phosphate to generate 2-deoxy-D-ribose 5-phosphate. This chain is Deoxyribose-phosphate aldolase, found in Streptococcus pyogenes serotype M2 (strain MGAS10270).